The following is a 116-amino-acid chain: Large ribosomal subunit protein uL23 (116 aa).

Belongs to the universal ribosomal protein uL23 family. In terms of assembly, part of the 50S ribosomal subunit. Contacts protein L29, and trigger factor when it is bound to the ribosome.

In terms of biological role, one of the early assembly proteins it binds 23S rRNA. One of the proteins that surrounds the polypeptide exit tunnel on the outside of the ribosome. Forms the main docking site for trigger factor binding to the ribosome. This chain is Large ribosomal subunit protein uL23, found in Psychrobacter sp. (strain PRwf-1).